The sequence spans 109 residues: Cell division protein ZapA (109 aa).

Residues 21–100 adopt a coiled-coil conformation; it reads PDQRDALNQA…EQALLERGRI (80 aa).

Belongs to the ZapA family. Type 1 subfamily. In terms of assembly, homodimer. Interacts with FtsZ.

It is found in the cytoplasm. Its function is as follows. Activator of cell division through the inhibition of FtsZ GTPase activity, therefore promoting FtsZ assembly into bundles of protofilaments necessary for the formation of the division Z ring. It is recruited early at mid-cell but it is not essential for cell division. The chain is Cell division protein ZapA from Shigella dysenteriae serotype 1 (strain Sd197).